A 346-amino-acid polypeptide reads, in one-letter code: Phenylalanine--tRNA ligase alpha subunit (346 aa).

Glu-262 serves as a coordination point for Mg(2+).

It belongs to the class-II aminoacyl-tRNA synthetase family. Phe-tRNA synthetase alpha subunit type 1 subfamily. Tetramer of two alpha and two beta subunits. The cofactor is Mg(2+).

The protein resides in the cytoplasm. The enzyme catalyses tRNA(Phe) + L-phenylalanine + ATP = L-phenylalanyl-tRNA(Phe) + AMP + diphosphate + H(+). The chain is Phenylalanine--tRNA ligase alpha subunit from Ehrlichia chaffeensis (strain ATCC CRL-10679 / Arkansas).